A 278-amino-acid polypeptide reads, in one-letter code: Biotin synthase (278 aa).

A Radical SAM core domain is found at 1–227; the sequence is MQIMLCAISN…NAHIMVAGGR (227 aa). The [4Fe-4S] cluster site is built by Cys16, Cys20, and Cys23. Residues Cys60, Cys95, and Cys153 each contribute to the [2Fe-2S] cluster site.

It belongs to the radical SAM superfamily. Biotin synthase family. As to quaternary structure, homodimer. [4Fe-4S] cluster is required as a cofactor. The cofactor is [2Fe-2S] cluster.

It carries out the reaction (4R,5S)-dethiobiotin + (sulfur carrier)-SH + 2 reduced [2Fe-2S]-[ferredoxin] + 2 S-adenosyl-L-methionine = (sulfur carrier)-H + biotin + 2 5'-deoxyadenosine + 2 L-methionine + 2 oxidized [2Fe-2S]-[ferredoxin]. Its pathway is cofactor biosynthesis; biotin biosynthesis; biotin from 7,8-diaminononanoate: step 2/2. In terms of biological role, catalyzes the conversion of dethiobiotin (DTB) to biotin by the insertion of a sulfur atom into dethiobiotin via a radical-based mechanism. This is Biotin synthase from Campylobacter lari (strain RM2100 / D67 / ATCC BAA-1060).